The following is a 59-amino-acid chain: uncharacterized protein (59 aa).

This is an uncharacterized protein from Sulfolobus islandicus rod-shaped virus 1 (SIRV-1).